The following is a 373-amino-acid chain: Putative glutamate--cysteine ligase 2-2 (373 aa).

The protein belongs to the glutamate--cysteine ligase type 2 family. YbdK subfamily.

It carries out the reaction L-cysteine + L-glutamate + ATP = gamma-L-glutamyl-L-cysteine + ADP + phosphate + H(+). ATP-dependent carboxylate-amine ligase which exhibits weak glutamate--cysteine ligase activity. In Legionella pneumophila (strain Corby), this protein is Putative glutamate--cysteine ligase 2-2.